The sequence spans 403 residues: Na(+)-translocating NADH-quinone reductase subunit B (403 aa).

Transmembrane regions (helical) follow at residues 56-76, 121-141, 164-184, 225-245, 260-280, 287-307, 312-332, 348-368, and 371-391; these read MMII…YNVG, AYFL…EVLF, LPPS…VVLG, GFAG…NILG, GSMG…LLLT, IVAG…AIGS, MFAM…GMIF, WLFG…NPAF, and GMML…HFVV. T230 bears the FMN phosphoryl threonine mark.

This sequence belongs to the NqrB/RnfD family. In terms of assembly, composed of six subunits; NqrA, NqrB, NqrC, NqrD, NqrE and NqrF. FMN serves as cofactor.

It is found in the cell inner membrane. It carries out the reaction a ubiquinone + n Na(+)(in) + NADH + H(+) = a ubiquinol + n Na(+)(out) + NAD(+). NQR complex catalyzes the reduction of ubiquinone-1 to ubiquinol by two successive reactions, coupled with the transport of Na(+) ions from the cytoplasm to the periplasm. NqrA to NqrE are probably involved in the second step, the conversion of ubisemiquinone to ubiquinol. The sequence is that of Na(+)-translocating NADH-quinone reductase subunit B from Pseudomonas aeruginosa (strain LESB58).